Consider the following 427-residue polypeptide: 3-phosphoshikimate 1-carboxyvinyltransferase (427 aa).

3 residues coordinate 3-phosphoshikimate: K20, S21, and R25. Residue K20 participates in phosphoenolpyruvate binding. Residues G92 and R120 each contribute to the phosphoenolpyruvate site. S166, Q168, D312, and K339 together coordinate 3-phosphoshikimate. Q168 is a phosphoenolpyruvate binding site. The active-site Proton acceptor is D312. R343 and R385 together coordinate phosphoenolpyruvate.

Belongs to the EPSP synthase family. In terms of assembly, monomer.

It localises to the cytoplasm. The enzyme catalyses 3-phosphoshikimate + phosphoenolpyruvate = 5-O-(1-carboxyvinyl)-3-phosphoshikimate + phosphate. The protein operates within metabolic intermediate biosynthesis; chorismate biosynthesis; chorismate from D-erythrose 4-phosphate and phosphoenolpyruvate: step 6/7. Its function is as follows. Catalyzes the transfer of the enolpyruvyl moiety of phosphoenolpyruvate (PEP) to the 5-hydroxyl of shikimate-3-phosphate (S3P) to produce enolpyruvyl shikimate-3-phosphate and inorganic phosphate. This is 3-phosphoshikimate 1-carboxyvinyltransferase from Streptococcus pyogenes serotype M28 (strain MGAS6180).